A 438-amino-acid polypeptide reads, in one-letter code: 23S rRNA (uracil(1939)-C(5))-methyltransferase RlmD (438 aa).

The TRAM domain maps to 10-69 (KASVNTKHLSVDVVRLDHNGAGIAFVDKKPVFIEGALPGEKAIIQFIEQKKQFSRAKLIK). Residues Cys82, Cys88, Cys91, and Cys169 each contribute to the [4Fe-4S] cluster site. The S-adenosyl-L-methionine site is built by Gln272, Phe301, Asn306, Glu322, Asn349, and Asp370. Cys396 serves as the catalytic Nucleophile.

This sequence belongs to the class I-like SAM-binding methyltransferase superfamily. RNA M5U methyltransferase family. RlmD subfamily.

The enzyme catalyses uridine(1939) in 23S rRNA + S-adenosyl-L-methionine = 5-methyluridine(1939) in 23S rRNA + S-adenosyl-L-homocysteine + H(+). Functionally, catalyzes the formation of 5-methyl-uridine at position 1939 (m5U1939) in 23S rRNA. The polypeptide is 23S rRNA (uracil(1939)-C(5))-methyltransferase RlmD (Aliivibrio fischeri (strain MJ11) (Vibrio fischeri)).